Here is a 376-residue protein sequence, read N- to C-terminus: Mitogen-activated protein kinase 5 (376 aa).

The 287-residue stretch at 43–329 (VPPIRPIGRG…VEEALCYPYL (287 aa)) folds into the Protein kinase domain. ATP contacts are provided by residues 49-57 (IGRGAYGFV) and Lys-72. Asp-169 (proton acceptor) is an active-site residue. A Phosphothreonine modification is found at Thr-201. The TXY signature appears at 201–203 (TEY). The residue at position 203 (Tyr-203) is a Phosphotyrosine. Thr-206 bears the Phosphothreonine mark.

Belongs to the protein kinase superfamily. CMGC Ser/Thr protein kinase family. MAP kinase subfamily. In terms of processing, autophosphorylated on threonine and tyrosine residues. Post-translationally, dually phosphorylated on Thr-201 and Tyr-203, which activates the enzyme.

The catalysed reaction is L-seryl-[protein] + ATP = O-phospho-L-seryl-[protein] + ADP + H(+). It catalyses the reaction L-threonyl-[protein] + ATP = O-phospho-L-threonyl-[protein] + ADP + H(+). With respect to regulation, activated by threonine and tyrosine phosphorylation. Activated by the MAP kinase kinase MKK2. Activated by the MAP kinase kinase MKK6 in vitro. The sequence is that of Mitogen-activated protein kinase 5 (MPK5) from Arabidopsis thaliana (Mouse-ear cress).